We begin with the raw amino-acid sequence, 610 residues long: Menin (610 aa).

Residues glycine 214–proline 390 form an interaction with FANCD2 region. Disordered stretches follow at residues alanine 385–leucine 404 and arginine 460–threonine 552. The segment covering glutamine 393–serine 402 has biased composition (low complexity). The segment covering arginine 484–leucine 500 has biased composition (basic and acidic residues). Serine 487 carries the phosphoserine modification. Pro residues-rich tracts occupy residues proline 512–threonine 521 and valine 537–glycine 548. Serine 543 carries the phosphoserine modification. Position 594 is a phosphothreonine (threonine 594).

Component of the MLL-HCF complex, at least composed of KMT2A/MLL1, MEN1, ASH2L, RBBP5, DPY30, WDR5, HCFC1 and HCFC2. Component of the menin-associated histone methyltransferase complex, at least composed of KMT2B/MLL4, MEN1, ASH2L, RBBP5, DPY30 and WDR5. Interacts with POLR2B. Interacts with POLR2A phosphorylated at 'Ser-5', but not with the unphosphorylated, nor 'Ser-2' phosphorylated POLR2A forms. Interacts with FANCD2 and DBF4. Interacts with SMAD3, but not with SMAD2, nor SMAD4. Directly interacts with NFKB1, NFKB2 and RELA. Interacts with JUND (via MBM motif); inhibits the interaction of JUND with MAPK10 and the phosphorylation of JUND by MAP kinases MAPK8 and MAPK10. Interacts with KMT2A (via MBM motif). The KMT2A-MEN1 complex interacts with PSIP1 with a greater affinity as MEN1 enhances interaction of KMT2A with PSIP1.

The protein resides in the nucleus. Essential component of a MLL/SET1 histone methyltransferase (HMT) complex, a complex that specifically methylates 'Lys-4' of histone H3 (H3K4). Functions as a transcriptional regulator. Binds to the TERT promoter and represses telomerase expression. Plays a role in TGFB1-mediated inhibition of cell-proliferation, possibly regulating SMAD3 transcriptional activity. Represses JUND-mediated transcriptional activation on AP1 sites, as well as that mediated by NFKB subunit RELA. Positively regulates HOXC8 and HOXC6 gene expression. May be involved in normal hematopoiesis through the activation of HOXA9 expression. May be involved in DNA repair. This chain is Menin (MEN1), found in Bos taurus (Bovine).